A 278-amino-acid polypeptide reads, in one-letter code: Small ribosomal subunit protein uS2 (278 aa).

The interval 233-258 (IDMEAAGEAPANKGKKKSAKARLDKS) is disordered.

The protein belongs to the universal ribosomal protein uS2 family.

This is Small ribosomal subunit protein uS2 from Bacteroides fragilis (strain ATCC 25285 / DSM 2151 / CCUG 4856 / JCM 11019 / LMG 10263 / NCTC 9343 / Onslow / VPI 2553 / EN-2).